The following is a 348-amino-acid chain: NADH-ubiquinone oxidoreductase chain 2 (348 aa).

11 consecutive transmembrane segments (helical) span residues 3–23 (PVVL…TFIG), 25–45 (HWLL…PLMI), 67–87 (SALL…WSLL), 95–115 (ATLV…HFWL), 118–138 (VLQG…KLAP), 149–171 (LNSN…GGLN), 178–198 (ILAY…HYSP), 203–223 (LNLA…KLFN), 240–260 (LSII…LSGF), 274–294 (DLAI…FFYL), and 324–344 (LILM…PTIF).

This sequence belongs to the complex I subunit 2 family.

The protein localises to the mitochondrion inner membrane. It carries out the reaction a ubiquinone + NADH + 5 H(+)(in) = a ubiquinol + NAD(+) + 4 H(+)(out). Functionally, core subunit of the mitochondrial membrane respiratory chain NADH dehydrogenase (Complex I) that is believed to belong to the minimal assembly required for catalysis. Complex I functions in the transfer of electrons from NADH to the respiratory chain. The immediate electron acceptor for the enzyme is believed to be ubiquinone. The chain is NADH-ubiquinone oxidoreductase chain 2 (MT-ND2) from Squalus acanthias (Spiny dogfish).